Consider the following 43-residue polypeptide: Large ribosomal subunit protein bL32 (43 aa).

It belongs to the bacterial ribosomal protein bL32 family.

The chain is Large ribosomal subunit protein bL32 (rpmF) from Carsonella ruddii (strain PV).